A 483-amino-acid polypeptide reads, in one-letter code: Protein EFFECTOR OF TRANSCRIPTION 2 (483 aa).

Residues 64-112 (SCPGLYELGVAVIGQEQCRKLEPDIVLASYLGQAESVRSRLQRYGRSGA) enclose the GIY-YIG domain. 2 Cx9Cx9RCx2HK repeats span residues 278-303 (CGVL…IEHK) and 338-363 (CGVI…EDHK). Positions 380 to 396 (EKTVKDEKPDPESHTES) are enriched in basic and acidic residues. The disordered stretch occupies residues 380–399 (EKTVKDEKPDPESHTESIEE). Cx9Cx9RCx2HK repeat units lie at residues 406–431 (CEAT…WQHK) and 453–478 (CGVK…EEHK).

In terms of tissue distribution, expressed in vascular tissues of stems, hypocotyls, leaves and flowers. Expressed in the vascular bundles of xylem in shoot parenchyma cells. Expressed in the remnant cytoplasm of differentiated fiber cells and in protoxylem element of parenchymal cells.

It is found in the cytoplasm. The protein localises to the nucleus. In terms of biological role, transcriptional regulator involved in the regulation of cell differentiation in meristems. Probably regulates the expression of various KNAT genes involved in the maintenance of the cells in an undifferentiated, merismastic state. Plays a role in the regulation of gibberellin 20 oxidase and the gibberellin-regulated protein GASA4. Localizes in the nucleus during the cellular differentiation state and may act via a single strand cutting domain. Transcriptional regulator required for the induction of dormancy during late seed development. Interacts genetically with FUS3 and may be component of the same regulatory pathway during embryogenesis. Binds both linear and supercoiled DNA without sequence preference. This chain is Protein EFFECTOR OF TRANSCRIPTION 2, found in Arabidopsis thaliana (Mouse-ear cress).